The primary structure comprises 90 residues: Probable Fe(2+)-trafficking protein (90 aa).

This sequence belongs to the Fe(2+)-trafficking protein family.

In terms of biological role, could be a mediator in iron transactions between iron acquisition and iron-requiring processes, such as synthesis and/or repair of Fe-S clusters in biosynthetic enzymes. The polypeptide is Probable Fe(2+)-trafficking protein (Polynucleobacter asymbioticus (strain DSM 18221 / CIP 109841 / QLW-P1DMWA-1) (Polynucleobacter necessarius subsp. asymbioticus)).